The primary structure comprises 146 residues: Large ribosomal subunit protein bL9 (146 aa).

It belongs to the bacterial ribosomal protein bL9 family.

In terms of biological role, binds to the 23S rRNA. This chain is Large ribosomal subunit protein bL9, found in Flavobacterium johnsoniae (strain ATCC 17061 / DSM 2064 / JCM 8514 / BCRC 14874 / CCUG 350202 / NBRC 14942 / NCIMB 11054 / UW101) (Cytophaga johnsonae).